A 306-amino-acid polypeptide reads, in one-letter code: Putative secretory carrier-associated membrane protein 1 (306 aa).

The interval 1 to 60 (MAGRYDSNPFEEDDVNPFSEQARGKAGGQPSYGGGAFYMPNPRNVPSMSSNSRLSPLPPE) is disordered. The Cytoplasmic segment spans residues 1 to 141 (MAGRYDSNPF…EIPSHLQRMQ (141 aa)). Residues 25-36 (KAGGQPSYGGGA) show a composition bias toward gly residues. Residues 44–54 (NVPSMSSNSRL) are compositionally biased toward polar residues. Positions 72 to 109 (LDSSKDLKNREKELQAREAELNKREKELKRREEAAARA) form a coiled coil. Transmembrane regions (helical) follow at residues 142–162 (YVAF…VIAV), 174–194 (IWLL…VLWY), 209–229 (FGLF…SAVA), and 257–277 (IFYF…IWVI). The Cytoplasmic portion of the chain corresponds to 278–306 (QQVYMYFRGSGKAAEMKRDATRGAMRAAF).

Belongs to the SCAMP family.

The protein resides in the cell membrane. The protein localises to the cytoplasmic vesicle. Its subcellular location is the secretory vesicle membrane. Probably involved in membrane trafficking. This Oryza sativa subsp. indica (Rice) protein is Putative secretory carrier-associated membrane protein 1 (SCAMP1).